Here is a 216-residue protein sequence, read N- to C-terminus: ATP-dependent Clp protease proteolytic subunit (216 aa).

Serine 101 functions as the Nucleophile in the catalytic mechanism. The active site involves histidine 126.

The protein belongs to the peptidase S14 family. In terms of assembly, component of the chloroplastic Clp protease core complex.

It is found in the plastid. The protein localises to the chloroplast stroma. The enzyme catalyses Hydrolysis of proteins to small peptides in the presence of ATP and magnesium. alpha-casein is the usual test substrate. In the absence of ATP, only oligopeptides shorter than five residues are hydrolyzed (such as succinyl-Leu-Tyr-|-NHMec, and Leu-Tyr-Leu-|-Tyr-Trp, in which cleavage of the -Tyr-|-Leu- and -Tyr-|-Trp bonds also occurs).. Its function is as follows. Cleaves peptides in various proteins in a process that requires ATP hydrolysis. Has a chymotrypsin-like activity. Plays a major role in the degradation of misfolded proteins. In Hordeum vulgare (Barley), this protein is ATP-dependent Clp protease proteolytic subunit.